A 331-amino-acid polypeptide reads, in one-letter code: MYKIAFDVMGSDNGSAVAIEAASRFIKSRKDLYLVFVGDEDQIKTSLEKFPIDESRFEILATKEFIDMNGSIMDIRRKKDSSMVRALETLKDKKVDAMITGGNSAAFIAGSHFILGELNGISRPGFMPTLPTAVSNKLTLLLDVGANLEADIEDIIGYAKMANIYAKNVLKIENPLIAQLNIGEEKSKGTLLQKEIYKELESDENINFFGNLESRDILAGKVDIIVTDGYTGNMCLKAFEGASKILMTEIKSQLYKTIFTKLKALTLKKSFDNVSKKFDYKNHSGAILLGVEGIAFKAHGSSDVKSFEATLRMTCDAVENDVLNKIKKELN.

The protein belongs to the PlsX family. Homodimer. Probably interacts with PlsY.

The protein resides in the cytoplasm. The catalysed reaction is a fatty acyl-[ACP] + phosphate = an acyl phosphate + holo-[ACP]. It functions in the pathway lipid metabolism; phospholipid metabolism. Its function is as follows. Catalyzes the reversible formation of acyl-phosphate (acyl-PO(4)) from acyl-[acyl-carrier-protein] (acyl-ACP). This enzyme utilizes acyl-ACP as fatty acyl donor, but not acyl-CoA. The chain is Phosphate acyltransferase from Mesoplasma florum (strain ATCC 33453 / NBRC 100688 / NCTC 11704 / L1) (Acholeplasma florum).